A 245-amino-acid chain; its full sequence is Probable phosphatase YcdX (245 aa).

Residues His7, His9, His15, His40, Glu73, His101, His131, Asp192, and His194 each contribute to the Zn(2+) site.

The protein belongs to the PHP family. In terms of assembly, homotrimer. Zn(2+) serves as cofactor.

This chain is Probable phosphatase YcdX, found in Shigella flexneri serotype 5b (strain 8401).